The sequence spans 186 residues: piRNA-mediated silencing protein C19orf84 (186 aa).

Disordered regions lie at residues 1 to 42 (MEQP…NSTD) and 89 to 186 (SQAG…ETEY). Positions 13-22 (NNLSLPSSGT) are enriched in polar residues. The span at 24-36 (PWPPAPLPAPPPL) shows a compositional bias: pro residues. A compositionally biased stretch (basic residues) spans 114–126 (RPGWGRGLHRRGL). Positions 145–157 (RTPPMTLPSPPTL) are enriched in pro residues.

Interacts with SPOCD1.

The protein localises to the nucleus. It is found in the nucleoplasm. Functionally, protein adapter involved in piRNA-directed transposon methylation by connecting PIWIL4-piRNA and DNA methylation machineries. The PIWIL4-piRNA pathway plays a central role during spermatogenesis by directing transposon DNA methylation and silencing, thereby preventing their mobilization, which is essential for the germline integrity. The chain is piRNA-mediated silencing protein C19orf84 from Homo sapiens (Human).